The chain runs to 242 residues: DNA-directed RNA polymerase III subunit rpc5 (242 aa).

Disordered stretches follow at residues 1 to 22 (MSFSEDQAMEEAKLRNDETEEQ) and 153 to 172 (LKAAAGPSNSSSGTSTPRGP). The span at 155–172 (AAAGPSNSSSGTSTPRGP) shows a compositional bias: low complexity.

As to quaternary structure, component of the RNA polymerase III (Pol III) complex consisting of 17 subunits.

The protein resides in the cytoplasm. It is found in the nucleus. Its function is as follows. DNA-dependent RNA polymerase catalyzes the transcription of DNA into RNA using the four ribonucleoside triphosphates as substrates. Specific peripheric component of RNA polymerase III which synthesizes small RNAs, such as 5S rRNA and tRNAs. The RPC53/RPC4-RPC37/RPC5 subcomplex is required for terminator recognition and reinitiation. The protein is DNA-directed RNA polymerase III subunit rpc5 (rpc37) of Schizosaccharomyces pombe (strain 972 / ATCC 24843) (Fission yeast).